The primary structure comprises 814 residues: Putative serine/threonine-protein kinase-like protein CCR3 (814 aa).

The first 30 residues, 1–30 (MKRFINSTVTFSVTVTIAVIIFFLLSPVTS), serve as a signal peptide directing secretion. Asparagine 6, asparagine 68, asparagine 136, asparagine 215, asparagine 226, asparagine 251, asparagine 260, asparagine 275, asparagine 299, and asparagine 309 each carry an N-linked (GlcNAc...) asparagine glycan. The Extracellular portion of the chain corresponds to 31–393 (LGSGSTYAVV…SSPPSKALTR (363 aa)). A compositionally biased stretch (pro residues) spans 366–381 (SQFPLPPPPPPPPPSP). Positions 366–388 (SQFPLPPPPPPPPPSPSTSSPPS) are disordered. The chain crosses the membrane as a helical span at residues 394–414 (GLLAFAIVGSVGAFAGICSVV). Residues 415–814 (YCLWTGVCLG…SSGICSIVSD (400 aa)) lie on the Cytoplasmic side of the membrane. Residues 433-478 (QPTITRGGSNSRSNSSNSRSLSIRRQGSRMLSMRRQRSGTSSMKHA) are disordered. Low complexity predominate over residues 441–457 (SNSRSNSSNSRSLSIRR). Residues 496–794 (FSLENKIGSG…DIVGNLERAL (299 aa)) enclose the Protein kinase domain. ATP-binding positions include 502–510 (IGSGSFGVV) and lysine 524. The active-site Proton acceptor is aspartate 631.

Belongs to the protein kinase superfamily. Ser/Thr protein kinase family. As to quaternary structure, homodimer. Expressed in roots, leaves, shoot apical meristems (SAM), and floral buds.

Its subcellular location is the membrane. It carries out the reaction L-seryl-[protein] + ATP = O-phospho-L-seryl-[protein] + ADP + H(+). The catalysed reaction is L-threonyl-[protein] + ATP = O-phospho-L-threonyl-[protein] + ADP + H(+). Functionally, serine/threonine-protein kinase. This Arabidopsis thaliana (Mouse-ear cress) protein is Putative serine/threonine-protein kinase-like protein CCR3 (CCR3).